We begin with the raw amino-acid sequence, 360 residues long: Probable L-asparaginase 3 (360 aa).

A signal peptide spans 1–16; that stretch reads MWSSIISFLFFSVALC. Residues N27, N35, and N40 are each glycosylated (N-linked (GlcNAc...) asparagine). The Asparaginase/glutaminase domain occupies 39–359; it reads PNVTIFAMGG…QNITDIFSLE (321 aa). The O-isoaspartyl threonine intermediate role is filled by T49. An N-linked (GlcNAc...) asparagine glycan is attached at N82. S96 serves as a coordination point for substrate. An N-linked (GlcNAc...) asparagine glycan is attached at N106. 129 to 130 lines the substrate pocket; sequence TD. Residues N144, N179, N246, N302, and N351 are each glycosylated (N-linked (GlcNAc...) asparagine).

This sequence belongs to the asparaginase 1 family.

The protein localises to the secreted. The protein resides in the cell wall. The enzyme catalyses L-asparagine + H2O = L-aspartate + NH4(+). In Schizosaccharomyces pombe (strain 972 / ATCC 24843) (Fission yeast), this protein is Probable L-asparaginase 3.